The chain runs to 232 residues: 2,3,4,5-tetrahydropyridine-2,6-dicarboxylate N-acetyltransferase (232 aa).

It belongs to the transferase hexapeptide repeat family. DapH subfamily.

The enzyme catalyses (S)-2,3,4,5-tetrahydrodipicolinate + acetyl-CoA + H2O = L-2-acetamido-6-oxoheptanedioate + CoA. It functions in the pathway amino-acid biosynthesis; L-lysine biosynthesis via DAP pathway; LL-2,6-diaminopimelate from (S)-tetrahydrodipicolinate (acetylase route): step 1/3. Functionally, catalyzes the transfer of an acetyl group from acetyl-CoA to tetrahydrodipicolinate. The polypeptide is 2,3,4,5-tetrahydropyridine-2,6-dicarboxylate N-acetyltransferase (Streptococcus pneumoniae (strain Taiwan19F-14)).